The following is a 464-amino-acid chain: Asparagine--tRNA ligase (464 aa).

Belongs to the class-II aminoacyl-tRNA synthetase family. Homodimer.

Its subcellular location is the cytoplasm. The catalysed reaction is tRNA(Asn) + L-asparagine + ATP = L-asparaginyl-tRNA(Asn) + AMP + diphosphate + H(+). This chain is Asparagine--tRNA ligase, found in Azobacteroides pseudotrichonymphae genomovar. CFP2.